Here is a 213-residue protein sequence, read N- to C-terminus: Uridine kinase (213 aa).

Residue 15 to 22 (GASASGKS) participates in ATP binding.

Belongs to the uridine kinase family.

The protein resides in the cytoplasm. The catalysed reaction is uridine + ATP = UMP + ADP + H(+). It carries out the reaction cytidine + ATP = CMP + ADP + H(+). Its pathway is pyrimidine metabolism; CTP biosynthesis via salvage pathway; CTP from cytidine: step 1/3. It participates in pyrimidine metabolism; UMP biosynthesis via salvage pathway; UMP from uridine: step 1/1. This Serratia proteamaculans (strain 568) protein is Uridine kinase.